We begin with the raw amino-acid sequence, 576 residues long: MWAPRCRRFWSRWEQVAALLLLLLLLGVPPRSLALPPIRYSHAGICPNDMNPNLWVDAQSTCRRECETDQECETYEKCCPNVCGTKSCVAARYMDVKGKKGPVGMPKEATCDHFMCLQQGSECDIWDGQPVCKCKDRCEKEPSFTCASDGLTYYNRCYMDAEACSKGITLAVVTCRYHFTWPNTSPPPPETTMHPTTASPETPELDMAAPALLNNPVHQSVTMGETVSFLCDVVGRPRPEITWEKQLEDRENVVMRPNHVRGNVVVTNIAQLVIYNAQLQDAGIYTCTARNVAGVLRADFPLSVVRGHQAAATSESSPNGTAFPAAECLKPPDSEDCGEEQTRWHFDAQANNCLTFTFGHCHRNLNHFETYEACMLACMSGPLAACSLPALQGPCKAYAPRWAYNSQTGQCQSFVYGGCEGNGNNFESREACEESCPFPRGNQRCRACKPRQKLVTSFCRSDFVILGRVSELTEEPDSGRALVTVDEVLKDEKMGLKFLGQEPLEVTLLHVDWACPCPNVTVSEMPLIIMGEVDGGMAMLRPDSFVGASSARRVRKLREVMHKKTCDVLKEFLGLH.

A signal peptide spans Met1–Ala34. Residues Arg39–Arg92 enclose the WAP domain. 8 disulfides stabilise this stretch: Cys46/Cys79, Cys62/Cys83, Cys66/Cys78, Cys72/Cys88, Cys134/Cys164, Cys138/Cys157, Cys146/Cys175, and Cys231/Cys287. One can recognise a Kazal-like domain in the interval Trp126 to Tyr177. The Ig-like C2-type domain maps to Pro210 to Ser303. N-linked (GlcNAc...) asparagine glycosylation occurs at Asn319. 9 disulfides stabilise this stretch: Cys328–Cys378, Cys337–Cys361, Cys353–Cys374, Cys386–Cys436, Cys395–Cys419, Cys411–Cys432, Cys445–Cys515, Cys448–Cys517, and Cys459–Cys566. BPTI/Kunitz inhibitor domains are found at residues Cys328–Cys378 and Cys386–Cys436. Residues Cys445 to Cys566 form the NTR domain. Residue Asn519 is glycosylated (N-linked (GlcNAc...) asparagine).

Belongs to the WFIKKN family. Interacts with both mature and propeptide myostatin/MSTN. As to expression, primarily expressed in ovary, testis and brain, but not in liver. In fetal tissues, it is primarily expressed in brain, skeletal muscle, thymus and kidney.

Its subcellular location is the secreted. Protease-inhibitor that contains multiple distinct protease inhibitor domains. Probably has serine protease- and metalloprotease-inhibitor activity. Inhibits the biological activity of mature myostatin, but not activin. This Homo sapiens (Human) protein is WAP, Kazal, immunoglobulin, Kunitz and NTR domain-containing protein 2 (WFIKKN2).